Consider the following 441-residue polypeptide: MAGPPASLSARDVGSFAYLSVKDRSPQILTKAIDTLHRHKSEFFEKHGEKGLEAEKKAISLLSKLRNELQTDKPIVPLVEKFVDTDIWNQYLEYQQSLLNESDGKPRWFLSPWLFVECYMYRRIHEAIIQSPPIDDFDIFKEFKDQNFFESQESIIALCTHLQELRKTIEDLDENQLKNEFFKVLQISLWGNKCDLSLSGGEHISQKTNIMNSLEDLKPFILVNDMDRLWSLLSNCKKTREKESVTRVDIVLDNSGFELITDLVLADFLLSSKLATKIHFYGKTIPWFVSDTTLHDFNWIIKQLKHSNNKWVSQCGVDWEDHVKTGRWVYLDHIFWTLPHEFSAMSQVAPDLHAALQKAHLIFFKGDLNYRKLTGDRRWEFTVPFHEALSGFHPAPLCSIRTLKAEVQVGLQPGQGEQLTASEPNWLTAGKYGVFQFDGPL.

An N-acetylalanine modification is found at A2. N6-acetyllysine is present on K40. At S102 the chain carries Phosphoserine. D253 and N254 together coordinate Mn(2+). Residue 253-254 (DN) coordinates substrate. 2 residues coordinate S-adenosyl-L-methionine: E258 and D291. D291 is a Mn(2+) binding site. Substrate contacts are provided by residues 367–371 (DLNYR) and K404. The short motif at 401–404 (RTLK) is the Subfamily III RTxK motif element.

Belongs to the damage-control phosphatase family. Sugar phosphate phosphatase III subfamily. Mn(2+) serves as cofactor. The cofactor is Ni(2+). In terms of processing, automethylated.

It carries out the reaction beta-D-fructose 1-phosphate + H2O = D-fructose + phosphate. The catalysed reaction is beta-D-fructose 6-phosphate = dihydroxyacetone + D-glyceraldehyde 3-phosphate. The enzyme catalyses L-glutamyl-[protein] + S-adenosyl-L-methionine = [protein]-L-glutamate 5-O-methyl ester + S-adenosyl-L-homocysteine. In terms of biological role, metal-dependent phosphatase that shows phosphatase activity against several substrates, including fructose-1-phosphate and fructose-6-phosphate. Its preference for fructose-1-phosphate, a strong glycating agent that causes DNA damage rather than a canonical yeast metabolite, suggests a damage-control function in hexose phosphate metabolism. Has also been shown to have O-methyltransferase activity that methylates glutamate residues of target proteins to form gamma-glutamyl methyl ester residues. Possibly methylates PCNA, suggesting it is involved in the DNA damage response. The chain is Damage-control phosphatase ARMT1 from Bos taurus (Bovine).